Reading from the N-terminus, the 511-residue chain is Probable DNA ligase (511 aa).

Residue Glu-209 participates in ATP binding. Lys-211 functions as the N6-AMP-lysine intermediate in the catalytic mechanism. ATP contacts are provided by Arg-216, Arg-231, Glu-260, Phe-299, Arg-371, and Lys-377.

This sequence belongs to the ATP-dependent DNA ligase family. It depends on Mg(2+) as a cofactor.

The catalysed reaction is ATP + (deoxyribonucleotide)n-3'-hydroxyl + 5'-phospho-(deoxyribonucleotide)m = (deoxyribonucleotide)n+m + AMP + diphosphate.. DNA ligase that seals nicks in double-stranded DNA during DNA replication, DNA recombination and DNA repair. This is Probable DNA ligase from Mycolicibacterium gilvum (strain PYR-GCK) (Mycobacterium gilvum (strain PYR-GCK)).